The sequence spans 238 residues: MKGILGRKVEMTQVFTANGKLVPVTVVEVQPNTILQVKTLETNGYVATQLGVFDKRENLVNKPELGQFKKANSVPKRFVKEIRNMEGFEVGSVISASDIFETGQYVDVTGISKGKGFAGAIKRHNYSRGPMAHGSGYHRGIGSMGAIINRIFKSKKMAGHMGHVKRTVQNLEVIAIDNNIMLVKGSIPGPNKGFVTIKANVKGLSNTQAAELLVRNAPVATEAPIEAPVVEEVVSTEE.

The protein belongs to the universal ribosomal protein uL3 family. As to quaternary structure, part of the 50S ribosomal subunit. Forms a cluster with proteins L14 and L19.

Functionally, one of the primary rRNA binding proteins, it binds directly near the 3'-end of the 23S rRNA, where it nucleates assembly of the 50S subunit. The polypeptide is Large ribosomal subunit protein uL3 (Mesoplasma florum (strain ATCC 33453 / NBRC 100688 / NCTC 11704 / L1) (Acholeplasma florum)).